Consider the following 290-residue polypeptide: MSDSLHTPEEPRPGPGEQLAHAHDGSLRHTRAKGEPRFPDGPKADPAGSHFERRIRSFQPRRSRVTAGQADALQRLWPKWGLDIDGHALDLTELFGNTHPVVLEIGFGMGEATARMAAEDPDTGILAVDVHTPGQGNLLNLADQHGLTNIRVANGDAIILLREMLPPDSLDGLRVYFPDPWPKKRHHKRRLIQPEFLTLAATRLRPGALVHCATDWEPYAEQMLDVLTAHPDFENTQPTGGYAPRPGFRPLTRFEGQGLDKGHVVNDLLFRRVQPRDQHRDLPPSATEAD.

Composition is skewed to basic and acidic residues over residues 1–12 (MSDSLHTPEEPR) and 20–43 (AHAHDGSLRHTRAKGEPRFPDGPK). A disordered region spans residues 1–49 (MSDSLHTPEEPRPGPGEQLAHAHDGSLRHTRAKGEPRFPDGPKADPAGS). Residues Glu-104, Asp-129, Asp-156, and Asp-179 each coordinate S-adenosyl-L-methionine. Residue Asp-179 is part of the active site. Substrate-binding positions include Lys-183, Asp-215, and 252–255 (TRFE).

The protein belongs to the class I-like SAM-binding methyltransferase superfamily. TrmB family.

It carries out the reaction guanosine(46) in tRNA + S-adenosyl-L-methionine = N(7)-methylguanosine(46) in tRNA + S-adenosyl-L-homocysteine. It participates in tRNA modification; N(7)-methylguanine-tRNA biosynthesis. Its function is as follows. Catalyzes the formation of N(7)-methylguanine at position 46 (m7G46) in tRNA. The chain is tRNA (guanine-N(7)-)-methyltransferase from Streptomyces avermitilis (strain ATCC 31267 / DSM 46492 / JCM 5070 / NBRC 14893 / NCIMB 12804 / NRRL 8165 / MA-4680).